The sequence spans 209 residues: MDGVTVIDHPLVQHKLTIMRKKETSTGSFRRLLREISTLLCYEVTRDLEMTMETIETPLQPMESPILEGKKLVFASILRAGNGLLEGMLDLVPSARVSHIGVYRDHETLQPVEYYFKAPEDISERLIIVVDPMLATGNSSIAAIDKLKERGAHNIRFLCLLAAPEGIANFRAAHPDVPVFTAAIDSHLNELGYIVPGLGDAGDRMYGTK.

5-phospho-alpha-D-ribose 1-diphosphate-binding positions include Arg-79, Arg-104, and 131-139 (DPMLATGNS). Residues Ile-194 and 199–201 (GDA) contribute to the uracil site. Asp-200 is a binding site for 5-phospho-alpha-D-ribose 1-diphosphate.

It belongs to the UPRTase family. Requires Mg(2+) as cofactor.

The catalysed reaction is UMP + diphosphate = 5-phospho-alpha-D-ribose 1-diphosphate + uracil. It functions in the pathway pyrimidine metabolism; UMP biosynthesis via salvage pathway; UMP from uracil: step 1/1. Allosterically activated by GTP. Its function is as follows. Catalyzes the conversion of uracil and 5-phospho-alpha-D-ribose 1-diphosphate (PRPP) to UMP and diphosphate. In Rhizobium rhizogenes (strain K84 / ATCC BAA-868) (Agrobacterium radiobacter), this protein is Uracil phosphoribosyltransferase.